Here is a 495-residue protein sequence, read N- to C-terminus: Glucose-6-phosphate 1-dehydrogenase (495 aa).

Residue K51 forms an Isoglutamyl lysine isopeptide (Lys-Gln) (interchain with Q-Cter in protein Pup) linkage. NADP(+) is bound by residues 94–95 (DL) and K154. Residues H184, K188, E222, and D241 each contribute to the substrate site. H246 (proton acceptor) is an active-site residue. K345 is a binding site for substrate.

The protein belongs to the glucose-6-phosphate dehydrogenase family.

It catalyses the reaction D-glucose 6-phosphate + NADP(+) = 6-phospho-D-glucono-1,5-lactone + NADPH + H(+). It participates in carbohydrate degradation; pentose phosphate pathway; D-ribulose 5-phosphate from D-glucose 6-phosphate (oxidative stage): step 1/3. Catalyzes the oxidation of glucose 6-phosphate to 6-phosphogluconolactone. This is Glucose-6-phosphate 1-dehydrogenase from Mycolicibacterium smegmatis (strain ATCC 700084 / mc(2)155) (Mycobacterium smegmatis).